We begin with the raw amino-acid sequence, 161 residues long: ATP synthase subunit b 1 (161 aa).

The helical transmembrane segment at 3–23 (LDATFYALVGLILFFVLIAYL) threads the bilayer.

This sequence belongs to the ATPase B chain family. In terms of assembly, F-type ATPases have 2 components, F(1) - the catalytic core - and F(0) - the membrane proton channel. F(1) has five subunits: alpha(3), beta(3), gamma(1), delta(1), epsilon(1). F(0) has three main subunits: a(1), b(2) and c(10-14). The alpha and beta chains form an alternating ring which encloses part of the gamma chain. F(1) is attached to F(0) by a central stalk formed by the gamma and epsilon chains, while a peripheral stalk is formed by the delta and b chains.

Its subcellular location is the cell inner membrane. F(1)F(0) ATP synthase produces ATP from ADP in the presence of a proton or sodium gradient. F-type ATPases consist of two structural domains, F(1) containing the extramembraneous catalytic core and F(0) containing the membrane proton channel, linked together by a central stalk and a peripheral stalk. During catalysis, ATP synthesis in the catalytic domain of F(1) is coupled via a rotary mechanism of the central stalk subunits to proton translocation. Functionally, component of the F(0) channel, it forms part of the peripheral stalk, linking F(1) to F(0). The protein is ATP synthase subunit b 1 of Sinorhizobium medicae (strain WSM419) (Ensifer medicae).